Consider the following 549-residue polypeptide: Lipase 3 (549 aa).

Positions 1 to 15 (MKLALALSLIASVAA) are cleaved as a signal peptide. Cys75 and Cys112 form a disulfide bridge. The active-site Acyl-ester intermediate is the Ser224. Cys283 and Cys292 form a disulfide bridge. Asn329 carries an N-linked (GlcNAc...) asparagine glycan. The Charge relay system role is filled by Glu356. Asn366 carries N-linked (GlcNAc...) asparagine glycosylation. His464 (charge relay system) is an active-site residue.

Belongs to the type-B carboxylesterase/lipase family. In terms of assembly, monomer and homodimer.

It carries out the reaction a triacylglycerol + H2O = a diacylglycerol + a fatty acid + H(+). This Diutina rugosa (Yeast) protein is Lipase 3 (LIP3).